A 244-amino-acid chain; its full sequence is Flagellar L-ring protein (244 aa).

A signal peptide spans 1 to 18 (MNMRVFIFLIFAAASVSA). The N-palmitoyl cysteine moiety is linked to residue Cys19. A lipid anchor (S-diacylglycerol cysteine) is attached at Cys19.

This sequence belongs to the FlgH family. As to quaternary structure, the basal body constitutes a major portion of the flagellar organelle and consists of four rings (L,P,S, and M) mounted on a central rod.

The protein localises to the cell outer membrane. Its subcellular location is the bacterial flagellum basal body. Its function is as follows. Assembles around the rod to form the L-ring and probably protects the motor/basal body from shearing forces during rotation. This is Flagellar L-ring protein from Jannaschia sp. (strain CCS1).